The chain runs to 222 residues: Gamma-glutamyl cyclotransferase gliK (222 aa).

A run of 2 helical transmembrane segments spans residues 154–174 and 187–207; these read GWWF…AAII and GHVP…MWAQ.

It belongs to the class-I pyridoxal-phosphate-dependent aminotransferase family.

The protein resides in the membrane. The enzyme catalyses an alpha-(gamma-L-glutamyl)-L-amino acid = 5-oxo-L-proline + an L-alpha-amino acid. It participates in secondary metabolite biosynthesis. Functionally, gamma-glutamyl cyclotransferase; part of the gene cluster that mediates the biosynthesis of an unusual class of epipolythiodioxopiperazines (ETPs) lacking the reactive thiol group important for toxicity. Firstly, L-tyrosine is prenylated by tcpD, before undergoing condensation with L-glycine in a reaction catalyzed by the NRPS tcpP leading to the diketopiperazine (DKP) backbone. Afterwards the alpha-carbon of tyrosine is oxidized by the cytochrome P450 tcpC to form a hydroxyl group. However, in contrast other ETP biosynthesis pathways studied so far, tcpC is not able to bishydroxylate the DKP at both alpha-carbon positions, but hydroxylates the alpha-carbon of the tyrosine part and the nitrogen of the glycine part. The next steps involve an alpha,beta-elimination reaction catalyzed by tcpI, a methylation by the methyltransferase tcpN the action of the four enzyme cascade tcpG/K/J/I. Due to a dysfunctional cytochrome P450 monooxygenase tcpC, the pathway leads to the biosynthesis of probable non-toxic metabolites lacking the reactive thiol group. The polypeptide is Gamma-glutamyl cyclotransferase gliK (Claviceps purpurea (strain 20.1) (Ergot fungus)).